Reading from the N-terminus, the 328-residue chain is DNA-directed RNA polymerase subunit alpha (328 aa).

Residues 1–233 are alpha N-terminal domain (alpha-NTD); that stretch reads MHNSATEFLK…EQLEAFIDLR (233 aa). The interval 247–328 is alpha C-terminal domain (alpha-CTD); it reads FDPVLLRPVD…WPPVSILKND (82 aa).

This sequence belongs to the RNA polymerase alpha chain family. As to quaternary structure, homodimer. The RNAP catalytic core consists of 2 alpha, 1 beta, 1 beta' and 1 omega subunit. When a sigma factor is associated with the core the holoenzyme is formed, which can initiate transcription.

The catalysed reaction is RNA(n) + a ribonucleoside 5'-triphosphate = RNA(n+1) + diphosphate. In terms of biological role, DNA-dependent RNA polymerase catalyzes the transcription of DNA into RNA using the four ribonucleoside triphosphates as substrates. In Wigglesworthia glossinidia brevipalpis, this protein is DNA-directed RNA polymerase subunit alpha.